A 234-amino-acid polypeptide reads, in one-letter code: LexA repressor (234 aa).

The H-T-H motif DNA-binding region spans 41-61; that stretch reads RAEIAAELGFRSPNAAEEHLK. Active-site for autocatalytic cleavage activity residues include Ser152 and Lys189.

This sequence belongs to the peptidase S24 family. As to quaternary structure, homodimer.

The enzyme catalyses Hydrolysis of Ala-|-Gly bond in repressor LexA.. Functionally, represses a number of genes involved in the response to DNA damage (SOS response), including recA and lexA. In the presence of single-stranded DNA, RecA interacts with LexA causing an autocatalytic cleavage which disrupts the DNA-binding part of LexA, leading to derepression of the SOS regulon and eventually DNA repair. The polypeptide is LexA repressor (Polaromonas naphthalenivorans (strain CJ2)).